We begin with the raw amino-acid sequence, 217 residues long: Large ribosomal subunit protein bL25 (217 aa).

The interval 178–217 (VVAPTEEPTEEEIEAMEGEQQTEEPEVVGESKEDEEKTEE) is disordered. Residues 184 to 205 (EPTEEEIEAMEGEQQTEEPEVV) are compositionally biased toward acidic residues. Positions 206–217 (GESKEDEEKTEE) are enriched in basic and acidic residues.

Belongs to the bacterial ribosomal protein bL25 family. CTC subfamily. As to quaternary structure, part of the 50S ribosomal subunit; part of the 5S rRNA/L5/L18/L25 subcomplex. Contacts the 5S rRNA. Binds to the 5S rRNA independently of L5 and L18.

This is one of the proteins that binds to the 5S RNA in the ribosome where it forms part of the central protuberance. The protein is Large ribosomal subunit protein bL25 of Staphylococcus aureus (strain MRSA252).